Here is a 1269-residue protein sequence, read N- to C-terminus: Histone-lysine N-methyltransferase SETDB1 (1269 aa).

A coiled-coil region spans residues Lys9–Ala63. Disordered stretches follow at residues Tyr85–Val121 and Gln153–Lys188. Residues Glu103–Val112 show a composition bias toward acidic residues. Residues Ser164–Ser177 show a composition bias toward low complexity. 2 consecutive Tudor domains span residues Glu250–Ser312 and Val340–Met395. Over residues Lys396–Arg414 the composition is skewed to polar residues. Positions Lys396–Val516 are disordered. Over residues Asp462–Ser476 the composition is skewed to low complexity. Polar residues predominate over residues Ser486 to Val497. The 72-residue stretch at His620–Leu691 folds into the MBD domain. One can recognise a Pre-SET domain in the interval Val753 to Gly826. Residues Cys755, Cys757, Cys761, Cys767, Cys769, Cys807, Cys811, Cys813, and Cys818 each contribute to the Zn(2+) site. Residues Val829 to Asn1244 enclose the SET domain. Residues Lys839–Trp841, Asp877, and Tyr879 contribute to the S-adenosyl-L-methionine site. The tract at residues Glu894–Arg1139 is disordered. The segment covering Ser919 to Asp932 has biased composition (acidic residues). Composition is skewed to basic and acidic residues over residues Ala968–Lys989 and Glu1021–Lys1033. Low complexity predominate over residues Thr1078 to Ser1094. Residues Ala1106–Gly1120 are compositionally biased toward polar residues. Residues Arg1198 and Asn1201–His1202 contribute to the S-adenosyl-L-methionine site. Residues Cys1204, Cys1257, Cys1259, and Cys1264 each contribute to the Zn(2+) site. The Post-SET domain maps to Lys1253–Leu1269.

The protein belongs to the class V-like SAM-binding methyltransferase superfamily. Histone-lysine methyltransferase family. Suvar3-9 subfamily.

The protein localises to the nucleus. Its subcellular location is the chromosome. The catalysed reaction is N(6),N(6)-dimethyl-L-lysyl(9)-[histone H3] + S-adenosyl-L-methionine = N(6),N(6),N(6)-trimethyl-L-lysyl(9)-[histone H3] + S-adenosyl-L-homocysteine + H(+). Functionally, histone methyltransferase that specifically trimethylates 'Lys-9' of histone H3. H3 'Lys-9' trimethylation represents a specific tag for epigenetic transcriptional repression by recruiting HP1 (CBX1, CBX3 and/or CBX5) proteins to methylated histones. Mainly functions in euchromatin regions, thereby playing a central role in the silencing of euchromatic genes. H3 'Lys-9' trimethylation is coordinated with DNA methylation. Plays a role in promoter hypermethylation and transcriptional silencing of tumor suppressor genes (TSGs) or other tumor-related genes. Also required to maintain a transcriptionally repressive state of genes in undifferentiated embryonic stem cells (ESCs). Associates at promoter regions of tumor suppressor genes (TSGs) leading to their gene silencing. This chain is Histone-lysine N-methyltransferase SETDB1 (setdb1), found in Xenopus laevis (African clawed frog).